A 469-amino-acid polypeptide reads, in one-letter code: Dihydrolipoyl dehydrogenase (469 aa).

FAD contacts are provided by residues 40-48 (EKASLGGVC), Lys-57, and Ala-120. A disulfide bridge connects residues Cys-48 and Cys-53. Residues 186–190 (GGGAI), Glu-209, and 275–278 (AVGV) each bind NAD(+). FAD contacts are provided by Asp-317 and Ala-325. Residue His-450 is the Proton acceptor of the active site.

This sequence belongs to the class-I pyridine nucleotide-disulfide oxidoreductase family. In terms of assembly, homodimer. It depends on FAD as a cofactor.

It localises to the cytoplasm. The catalysed reaction is N(6)-[(R)-dihydrolipoyl]-L-lysyl-[protein] + NAD(+) = N(6)-[(R)-lipoyl]-L-lysyl-[protein] + NADH + H(+). Lipoamide dehydrogenase is a component of the alpha-ketoacid dehydrogenase complexes. In Chlorobaculum parvum (strain DSM 263 / NCIMB 8327) (Chlorobium vibrioforme subsp. thiosulfatophilum), this protein is Dihydrolipoyl dehydrogenase (lpd).